Here is a 664-residue protein sequence, read N- to C-terminus: Macoilin (664 aa).

The next 4 helical transmembrane spans lie at 28–48, 75–95, 120–140, and 154–174; these read TFLYLKFLVVWALVLLADFVL, AFSVFFVCVAFTSNIICLLFI, VCLPTVSLWILFVYIEAAIRF, and FAAHCIGYPVVTLGFGFKSYV. The span at 253–265 shows a compositional bias: basic and acidic residues; that stretch reads REKGKEKDKDAKK. The disordered stretch occupies residues 253 to 274; it reads REKGKEKDKDAKKHNLGINNNN. Serine 305 is modified (phosphoserine). Positions 320–348 are enriched in polar residues; that stretch reads KNYKNASGVVNSSPRSHSATNGSIPSSSS. The segment at 320-375 is disordered; that stretch reads KNYKNASGVVNSSPRSHSATNGSIPSSSSKNEKKQKCTSKSPSTHKDLMENCIPNN. The N-linked (GlcNAc...) asparagine glycan is linked to asparagine 324. Phosphoserine is present on serine 332. N-linked (GlcNAc...) asparagine glycans are attached at residues asparagine 340 and asparagine 452. The interval 630 to 664 is disordered; the sequence is TSPLSPVSPHYSSKFVETSPSGLDPNASVYQPLKK. Phosphoserine occurs at positions 631 and 634. Asparagine 655 is a glycosylation site (N-linked (GlcNAc...) asparagine).

The protein belongs to the macoilin family.

The protein localises to the rough endoplasmic reticulum membrane. Its subcellular location is the nucleus membrane. Its function is as follows. Plays a role in the regulation of neuronal activity. This is Macoilin (MACO1) from Canis lupus familiaris (Dog).